An 88-amino-acid polypeptide reads, in one-letter code: Phosphocarrier protein HPr (88 aa).

The region spanning Met-1–Gln-88 is the HPr domain. Catalysis depends on His-15, which acts as the Pros-phosphohistidine intermediate. A Phosphoserine; by HPrK/P modification is found at Ser-46.

It belongs to the HPr family.

The protein localises to the cytoplasm. With respect to regulation, phosphorylation on Ser-46 inhibits the phosphoryl transfer from enzyme I to HPr. In terms of biological role, general (non sugar-specific) component of the phosphoenolpyruvate-dependent sugar phosphotransferase system (sugar PTS). This major carbohydrate active-transport system catalyzes the phosphorylation of incoming sugar substrates concomitantly with their translocation across the cell membrane. The phosphoryl group from phosphoenolpyruvate (PEP) is transferred to the phosphoryl carrier protein HPr by enzyme I. Phospho-HPr then transfers it to the PTS EIIA domain. Functionally, P-Ser-HPr interacts with the catabolite control protein A (CcpA), forming a complex that binds to DNA at the catabolite response elements cre, operator sites preceding a large number of catabolite-regulated genes. Thus, P-Ser-HPr is a corepressor in carbon catabolite repression (CCR), a mechanism that allows bacteria to coordinate and optimize the utilization of available carbon sources. P-Ser-HPr also plays a role in inducer exclusion, in which it probably interacts with several non-PTS permeases and inhibits their transport activity. This is Phosphocarrier protein HPr (ptsH) from Lysinibacillus sphaericus (Bacillus sphaericus).